Reading from the N-terminus, the 1333-residue chain is NPC1-like intracellular cholesterol transporter 1 (1333 aa).

Residues 1-20 (MAAAWQGWLLWALLLNSAQG) form the signal peptide. The Extracellular portion of the chain corresponds to 21-284 (ELYTPTHKAG…SFYMGRMPGW (264 aa)). Cystine bridges form between Cys32/Cys90, Cys38/Cys56, Cys77/Cys125, Cys91/Cys129, Cys113/Cys254, Cys116/Cys172, Cys189/Cys197, Cys243/Cys259, and Cys256/Cys263. Residues 285–305 (LALIIIFTAVFVLLSVVLVYL) form a helical membrane-spanning segment. Residues 306–352 (RVASNRNKNKTAGSQEAPNLPRKRRFSPHTVLGRFFESWGTRVASWP) are Cytoplasmic-facing. Residues 353–373 (LTVLALSFIVVIALSVGLTFI) traverse the membrane as a helical segment. At 374–632 (ELTTDPVELW…DEINRTTIQD (259 aa)) the chain is on the extracellular side. 2 disulfide bridges follow: Cys471/Cys485 and Cys525/Cys542. Residues 632–797 (DLPVFAISYL…MTAFVALLSL (166 aa)) enclose the SSD domain. Residues 633 to 653 (LPVFAISYLIVFLYISLALGS) form a helical membrane-spanning segment. Topologically, residues 654–665 (YSRWSRVAVDSK) are cytoplasmic. A helical transmembrane segment spans residues 666–686 (ATLGLGGVAVVLGAVVAAMGF). Topologically, residues 687 to 696 (YSYLGVPSSL) are extracellular. Residues 697–717 (VIIQVVPFLVLAVGADNIFIF) form a helical membrane-spanning segment. The Cytoplasmic segment spans residues 718 to 742 (VLEYQRLPRMPGEQREAHIGRTLGS). The helical transmembrane segment at 743 to 763 (VAPSMLLCSLSEAICFFLGAL) threads the bilayer. The Extracellular segment spans residues 764–776 (TSMPAVRTFALTS). The chain crosses the membrane as a helical span at residues 777–797 (GLAIIFDFLLQMTAFVALLSL). The Cytoplasmic segment spans residues 798-846 (DSKRQEASRPDVVCCFSSRNLPPPKQKEGLLLCFFRKIYTPFLLHRFIR). The chain crosses the membrane as a helical span at residues 847–867 (PVVLLLFLVLFGANLYLMCNI). Over 868–1113 (SVGLDQDLAL…QQYLTVLPEG (246 aa)) the chain is Extracellular. Cystine bridges form between Cys920/Cys925, Cys967/Cys1025, and Cys981/Cys990. Residues 1114–1134 (IFTLALCFVPTFVVCYLLLGL) traverse the membrane as a helical segment. At 1135 to 1142 (DIRSGILN) the chain is on the cytoplasmic side. The helical transmembrane segment at 1143-1163 (LLSIIMILVDTIGLMAVWGIS) threads the bilayer. Topologically, residues 1164-1165 (YN) are extracellular. A helical transmembrane segment spans residues 1166-1186 (AVSLINLVTAVGMSVEFVSHI). Topologically, residues 1187–1206 (TRSFAVSTKPTRLERAKDAT) are cytoplasmic. The helical transmembrane segment at 1207-1227 (IFMGSAVFAGVAMTNFPGILI) threads the bilayer. Over 1228 to 1242 (LGFAQAQLIQIFFFR) the chain is Extracellular. A helical transmembrane segment spans residues 1243–1263 (LNLLITLLGLLHGLVFLPVVL). Topologically, residues 1264 to 1333 (SYLGPDVNQA…SSLPKSDQKF (70 aa)) are cytoplasmic.

This sequence belongs to the patched family. As to quaternary structure, interacts with RAB11A, MYO5B and RAB11FIP2. Interaction with RAB11A, MYO5B and RAB11FIP2 is required for proper transport to the plasma membrane upon cholesterol depletion. Interacts with NPC2. Interacts with LIMA1. In terms of processing, highly glycosylated. Expressed in small intestine, stomach and muscle, along with detectable expression in lung, heart, gall bladder, brain, testis, skin and liver. Expression in liver is extremely low.

Its subcellular location is the apical cell membrane. The protein localises to the cell membrane. The enzyme catalyses cholesterol(in) = cholesterol(out). It catalyses the reaction sitosterol(out) = sitosterol(in). In terms of biological role, plays a major role in cholesterol homeostasis. Critical for the uptake of cholesterol across the plasma membrane of the intestinal enterocyte. Involved in plant sterol absorption, it transports sitosterol, although at lower rates than cholesterol. May have a function in the transport of multiple lipids and their homeostasis, thereby influencing lipid metabolism regulation. May be involved in caveolin trafficking from the plasma membrane. Acts as a negative regulator of NPC2 and down-regulates its expression and secretion by inhibiting its maturation and accelerating its degradation. The polypeptide is NPC1-like intracellular cholesterol transporter 1 (Mus musculus (Mouse)).